Reading from the N-terminus, the 264-residue chain is Small ribosomal subunit protein eS1B (264 aa).

The tract at residues 233-264 is disordered; sequence GEGGGSGKPAADETGAKVERADGYEPPVQESV. A compositionally biased stretch (basic and acidic residues) spans 242–255; that stretch reads AADETGAKVERADG.

The protein belongs to the eukaryotic ribosomal protein eS1 family. Component of the small ribosomal subunit. Mature ribosomes consist of a small (40S) and a large (60S) subunit. The 40S subunit contains about 33 different proteins and 1 molecule of RNA (18S). The 60S subunit contains about 49 different proteins and 3 molecules of RNA (28S, 5.8S and 5S). Part of the small subunit (SSU) processome, composed of more than 70 proteins and the RNA chaperone small nucleolar RNA (snoRNA) U3.

The protein resides in the cytoplasm. It is found in the nucleus. Its subcellular location is the nucleolus. Component of the small ribosomal subunit. The ribosome is a large ribonucleoprotein complex responsible for the synthesis of proteins in the cell. Part of the small subunit (SSU) processome, first precursor of the small eukaryotic ribosomal subunit. During the assembly of the SSU processome in the nucleolus, many ribosome biogenesis factors, an RNA chaperone and ribosomal proteins associate with the nascent pre-rRNA and work in concert to generate RNA folding, modifications, rearrangements and cleavage as well as targeted degradation of pre-ribosomal RNA by the RNA exosome. May play a role during erythropoiesis. This chain is Small ribosomal subunit protein eS1B (rps3a-b), found in Xenopus laevis (African clawed frog).